The following is a 540-amino-acid chain: Chaperonin GroEL 1 (540 aa).

ATP is bound by residues 30 to 33 (TLGP), Lys51, 87 to 91 (DGTTT), Gly415, 480 to 482 (NAA), and Asp496.

Belongs to the chaperonin (HSP60) family. Forms a cylinder of 14 subunits composed of two heptameric rings stacked back-to-back. Interacts with the co-chaperonin GroES.

It is found in the cytoplasm. The enzyme catalyses ATP + H2O + a folded polypeptide = ADP + phosphate + an unfolded polypeptide.. Its function is as follows. Together with its co-chaperonin GroES, plays an essential role in assisting protein folding. The GroEL-GroES system forms a nano-cage that allows encapsulation of the non-native substrate proteins and provides a physical environment optimized to promote and accelerate protein folding. The polypeptide is Chaperonin GroEL 1 (Bradyrhizobium diazoefficiens (strain JCM 10833 / BCRC 13528 / IAM 13628 / NBRC 14792 / USDA 110)).